Reading from the N-terminus, the 124-residue chain is Large ribosomal subunit protein bL12 (124 aa).

The protein belongs to the bacterial ribosomal protein bL12 family. Homodimer. Part of the ribosomal stalk of the 50S ribosomal subunit. Forms a multimeric L10(L12)X complex, where L10 forms an elongated spine to which 2 to 4 L12 dimers bind in a sequential fashion. Binds GTP-bound translation factors.

In terms of biological role, forms part of the ribosomal stalk which helps the ribosome interact with GTP-bound translation factors. Is thus essential for accurate translation. The protein is Large ribosomal subunit protein bL12 of Xanthobacter autotrophicus (strain ATCC BAA-1158 / Py2).